We begin with the raw amino-acid sequence, 1358 residues long: Probable aldehyde oxidase 1 (1358 aa).

Residues 4–91 enclose the 2Fe-2S ferredoxin-type domain; sequence AAAVVAVNGE…HCAVTTSEGI (88 aa). Residues C43, C48, C51, and C73 each coordinate [2Fe-2S] cluster. Residues 236 to 418 form the FAD-binding PCMH-type domain; the sequence is AVTGDGCWFH…ISISIPDWCS (183 aa). Residues 540 to 567 are disordered; the sequence is KPENANNVPNGSCTTNGTTNGSAESTVD. Positions 549-561 are enriched in low complexity; sequence NGSCTTNGTTNGS.

It belongs to the xanthine dehydrogenase family. As to quaternary structure, aldehyde oxidases (AO) are homodimers and heterodimers of AO subunits. It depends on [2Fe-2S] cluster as a cofactor. Requires FAD as cofactor. Mo-molybdopterin is required as a cofactor.

It catalyses the reaction an aldehyde + O2 + H2O = a carboxylate + H2O2 + H(+). The chain is Probable aldehyde oxidase 1 from Oryza sativa subsp. japonica (Rice).